The following is a 202-amino-acid chain: Probable cobalt-precorrin-6B C(15)-methyltransferase (decarboxylating) (202 aa).

S-adenosyl-L-methionine is bound by residues threonine 29, 53–57, aspartate 77, and valine 106; that span reads GCGSG.

This sequence belongs to the methyltransferase superfamily. Archaeal-type CbiT family.

The enzyme catalyses Co-precorrin-6B + S-adenosyl-L-methionine = Co-precorrin-7 + S-adenosyl-L-homocysteine + CO2. Its pathway is cofactor biosynthesis; adenosylcobalamin biosynthesis; cob(II)yrinate a,c-diamide from sirohydrochlorin (anaerobic route): step 8/10. Functionally, catalyzes the methylation of C-15 in cobalt-precorrin-6B followed by the decarboxylation of C-12 to form cobalt-precorrin-7. The chain is Probable cobalt-precorrin-6B C(15)-methyltransferase (decarboxylating) from Thermoplasma acidophilum (strain ATCC 25905 / DSM 1728 / JCM 9062 / NBRC 15155 / AMRC-C165).